The sequence spans 436 residues: GTPase Der (436 aa).

2 EngA-type G domains span residues 4-167 (PVVA…KDEE) and 176-351 (IKLS…ENHK). GTP-binding positions include 10–17 (GRPNVGKS), 57–61 (DTGGI), 119–122 (NKVD), 182–189 (GRPNVGKS), 229–233 (DTAGM), and 294–297 (NKWD). Residues 352–436 (KRVQSSTLNE…PIRIIPRKRN (85 aa)) enclose the KH-like domain.

Belongs to the TRAFAC class TrmE-Era-EngA-EngB-Septin-like GTPase superfamily. EngA (Der) GTPase family. Associates with the 50S ribosomal subunit.

GTPase that plays an essential role in the late steps of ribosome biogenesis. This is GTPase Der from Staphylococcus carnosus (strain TM300).